A 278-amino-acid polypeptide reads, in one-letter code: HTH-type transcriptional regulator TsaQ1/TsaQ2 (278 aa).

The HTH iclR-type domain maps to 19–80 (VHSLAKGLEI…PRSRKLAMGA (62 aa)). A DNA-binding region (H-T-H motif) is located at residues 40–59 (NQQLVELTGLPKATVSRLTS). The IclR-ED domain occupies 95-266 (LQRIARPHME…VQDIQAEMRA (172 aa)).

Functionally, both copies function as additional regulators for the tsa locus, specifically for tsaT. This is HTH-type transcriptional regulator TsaQ1/TsaQ2 (tsaQ1) from Comamonas testosteroni (Pseudomonas testosteroni).